Consider the following 185-residue polypeptide: Translation initiation factor IF-3 (185 aa).

It belongs to the IF-3 family. In terms of assembly, monomer.

It is found in the cytoplasm. In terms of biological role, IF-3 binds to the 30S ribosomal subunit and shifts the equilibrium between 70S ribosomes and their 50S and 30S subunits in favor of the free subunits, thus enhancing the availability of 30S subunits on which protein synthesis initiation begins. This is Translation initiation factor IF-3 from Streptococcus pneumoniae serotype 19F (strain G54).